Consider the following 137-residue polypeptide: BolA-like protein 1 (137 aa).

Residue serine 81 is modified to Phosphoserine. Residues 114–137 (WGENSQLDTSPPCLGGNKKTLGTP) form a disordered region.

The protein belongs to the BolA/IbaG family. Interacts with GLRX5.

It is found in the mitochondrion. Functionally, acts as a mitochondrial iron-sulfur (Fe-S) cluster assembly factor that facilitates (Fe-S) cluster insertion into a subset of mitochondrial proteins. Probably acts together with the monothiol glutaredoxin GLRX5. May protect cells against oxidative stress. The sequence is that of BolA-like protein 1 (BOLA1) from Pongo abelii (Sumatran orangutan).